We begin with the raw amino-acid sequence, 187 residues long: Lipoprotein signal peptidase (187 aa).

3 helical membrane passes run 12–32 (VAVF…TKMW), 68–88 (MTWL…VLAV), and 91–111 (ISMK…GNLI). Active-site residues include Asp-127 and Asp-140. A helical membrane pass occupies residues 141–161 (IFLMLAGVAAVLLLFLGEPFS). The interval 167–187 (EANGKTLGDDANATDDGAKAA) is disordered.

It belongs to the peptidase A8 family.

It is found in the cell membrane. The catalysed reaction is Release of signal peptides from bacterial membrane prolipoproteins. Hydrolyzes -Xaa-Yaa-Zaa-|-(S,diacylglyceryl)Cys-, in which Xaa is hydrophobic (preferably Leu), and Yaa (Ala or Ser) and Zaa (Gly or Ala) have small, neutral side chains.. It participates in protein modification; lipoprotein biosynthesis (signal peptide cleavage). Functionally, this protein specifically catalyzes the removal of signal peptides from prolipoproteins. The protein is Lipoprotein signal peptidase of Bifidobacterium adolescentis (strain ATCC 15703 / DSM 20083 / NCTC 11814 / E194a).